The primary structure comprises 279 residues: 3-methyl-2-oxobutanoate hydroxymethyltransferase (279 aa).

Mg(2+) is bound by residues Asp43 and Asp82. 3-methyl-2-oxobutanoate-binding positions include 43–44, Asp82, and Lys112; that span reads DS. Glu114 is a binding site for Mg(2+). Glu181 (proton acceptor) is an active-site residue.

The protein belongs to the PanB family. In terms of assembly, homodecamer; pentamer of dimers. Mg(2+) serves as cofactor.

It is found in the cytoplasm. The enzyme catalyses 3-methyl-2-oxobutanoate + (6R)-5,10-methylene-5,6,7,8-tetrahydrofolate + H2O = 2-dehydropantoate + (6S)-5,6,7,8-tetrahydrofolate. It participates in cofactor biosynthesis; (R)-pantothenate biosynthesis; (R)-pantoate from 3-methyl-2-oxobutanoate: step 1/2. Catalyzes the reversible reaction in which hydroxymethyl group from 5,10-methylenetetrahydrofolate is transferred onto alpha-ketoisovalerate to form ketopantoate. This chain is 3-methyl-2-oxobutanoate hydroxymethyltransferase, found in Exiguobacterium sibiricum (strain DSM 17290 / CCUG 55495 / CIP 109462 / JCM 13490 / 255-15).